The chain runs to 234 residues: Carboxy-S-adenosyl-L-methionine synthase (234 aa).

S-adenosyl-L-methionine-binding positions include Tyr35, 60-62, 83-84, 109-110, Asn124, and Arg191; these read GCS, DN, and DI.

Belongs to the class I-like SAM-binding methyltransferase superfamily. Cx-SAM synthase family. Homodimer.

It carries out the reaction prephenate + S-adenosyl-L-methionine = carboxy-S-adenosyl-L-methionine + 3-phenylpyruvate + H2O. Its function is as follows. Catalyzes the conversion of S-adenosyl-L-methionine (SAM) to carboxy-S-adenosyl-L-methionine (Cx-SAM). This chain is Carboxy-S-adenosyl-L-methionine synthase, found in Campylobacter hominis (strain ATCC BAA-381 / DSM 21671 / CCUG 45161 / LMG 19568 / NCTC 13146 / CH001A).